A 106-amino-acid polypeptide reads, in one-letter code: Small ribosomal subunit protein uS10 (106 aa).

The protein belongs to the universal ribosomal protein uS10 family. As to quaternary structure, part of the 30S ribosomal subunit.

In terms of biological role, involved in the binding of tRNA to the ribosomes. The protein is Small ribosomal subunit protein uS10 of Synechococcus sp. (strain CC9311).